The following is a 342-amino-acid chain: Anthranilate phosphoribosyltransferase (342 aa).

Residues Gly-81, 84-85 (GD), Thr-89, 91-94 (NIST), 109-117 (KHGNRALSS), and Thr-121 each bind 5-phospho-alpha-D-ribose 1-diphosphate. Gly-81 lines the anthranilate pocket. Ser-93 serves as a coordination point for Mg(2+). Asn-112 serves as a coordination point for anthranilate. Residue Arg-167 participates in anthranilate binding. Mg(2+) is bound by residues Asp-225 and Glu-226.

It belongs to the anthranilate phosphoribosyltransferase family. In terms of assembly, homodimer. Mg(2+) serves as cofactor.

It catalyses the reaction N-(5-phospho-beta-D-ribosyl)anthranilate + diphosphate = 5-phospho-alpha-D-ribose 1-diphosphate + anthranilate. Its pathway is amino-acid biosynthesis; L-tryptophan biosynthesis; L-tryptophan from chorismate: step 2/5. In terms of biological role, catalyzes the transfer of the phosphoribosyl group of 5-phosphorylribose-1-pyrophosphate (PRPP) to anthranilate to yield N-(5'-phosphoribosyl)-anthranilate (PRA). This Agrobacterium fabrum (strain C58 / ATCC 33970) (Agrobacterium tumefaciens (strain C58)) protein is Anthranilate phosphoribosyltransferase.